A 299-amino-acid polypeptide reads, in one-letter code: Phosphoribosylaminoimidazole-succinocarboxamide synthase (299 aa).

This sequence belongs to the SAICAR synthetase family.

The enzyme catalyses 5-amino-1-(5-phospho-D-ribosyl)imidazole-4-carboxylate + L-aspartate + ATP = (2S)-2-[5-amino-1-(5-phospho-beta-D-ribosyl)imidazole-4-carboxamido]succinate + ADP + phosphate + 2 H(+). It participates in purine metabolism; IMP biosynthesis via de novo pathway; 5-amino-1-(5-phospho-D-ribosyl)imidazole-4-carboxamide from 5-amino-1-(5-phospho-D-ribosyl)imidazole-4-carboxylate: step 1/2. The protein is Phosphoribosylaminoimidazole-succinocarboxamide synthase of Streptomyces coelicolor (strain ATCC BAA-471 / A3(2) / M145).